Here is an 847-residue protein sequence, read N- to C-terminus: MSKVRLAIIGNGMVGHRFIEDLLDKSDAANFDITVFCEEPRIAYDRVHLSSYFSHHTAEELSLVREGFYEKHGIKVLVGERAITINRQEKVIHSSAGRTVFYDKLIMATGSYPWIPPIKGSDTQDCFVYRTIEDLNAIESCARRSKRGAVVGGGLLGLEAAGALKNLGIETHVIEFAPMLMAEQLDQMGGEQLRRKIESMGVRVHTSKNTLEIVQEGVEARKTMRFADGSELEVDFIVFSTGIRPRDKLATQCGLDVAPRGGIVINDSCQTSDPDIYAIGECASWNNRVFGLVAPGYKMAQVAVDHILGSENAFEGADLSAKLKLLGVDVGGIGDAHGRTPGARSYVYLDESKEIYKRLIVSEDNKTLLGAVLVGDTSDYGNLLQLVLNAIELPENPDSLILPAHSGSGKPSIGVDKLPDSAQICSCFDVTKGDLIAAINKGCHTVAALKAETKAGTGCGGCIPLVTQVLNAELAKQGIEVNNNLCEHFAYSRQELFHLIRVEGIKTFEELLAKHGKGYGCEVCKPTVGSLLASCWNEYILKPEHTPLQDSNDNFLANIQKDGTYSVIPRSPGGEITPEGLMAVGRIAREFNLYTKITGSQRLAMFGAQKDDLPEIWRQLIEAGFETGHAYAKALRMAKTCVGSTWCRYGVGDSVGLGVELENRYKGIRTPHKMKFGVSGCTRECSEAQGKDVGIIATEKGWNLYVCGNGGMKPRHADLLAADIDRETLIKYLDRFMMFYIRTADKLTRTAPWLENLEGGIDYLKAVIIDDKLGLNAHLEEEMARLREAVLCEWTETVNTPSAQTRFKHFINSDKRDPNVQMVPEREQHRPATPYERIPVTLVEDNA.

Position 44-79 (44-79 (YDRVHLSSYFSHHTAEELSLVREGFYEKHGIKVLVG)) interacts with FAD. 193–225 (LRRKIESMGVRVHTSKNTLEIVQEGVEARKTMR) provides a ligand contact to NAD(+). [2Fe-2S] cluster is bound by residues Cys-425, Cys-427, Cys-459, and Cys-462. Positions 641, 647, 681, and 685 each coordinate [4Fe-4S] cluster. Cys-685 contributes to the siroheme binding site.

Belongs to the nitrite and sulfite reductase 4Fe-4S domain family. Homodimer which associates with NirD. Siroheme is required as a cofactor. The cofactor is [2Fe-2S] cluster. Requires [4Fe-4S] cluster as cofactor. FAD serves as cofactor.

The enzyme catalyses NH4(+) + 3 NAD(+) + 2 H2O = nitrite + 3 NADH + 5 H(+). It participates in nitrogen metabolism; nitrate reduction (assimilation). The protein is Nitrite reductase (NADH) large subunit (nirB) of Escherichia coli (strain K12).